The chain runs to 205 residues: Golgi to ER traffic protein 1 (205 aa).

Residues 1-9 (MFELQPSSI) lie on the Lumenal side of the membrane. A helical transmembrane segment spans residues 10 to 29 (VVLVFCVLAIKVCISLIGKT). The Cytoplasmic portion of the chain corresponds to 30-116 (TIQDRIWYLY…QISKLVNLAI (87 aa)). Positions 53–103 (ALAQKREELVRVNKERRAISAQDEYAKWTKLNRQFDKLNSEVNDLAEATSS) form a coiled coil. The helical transmembrane segment at 117-137 (AATTTAPIWFSRIWYRKVVLF) threads the bilayer. The Lumenal portion of the chain corresponds to 138–161 (YLPPKVFPYYIEWVLALPFIVTGG). Residues 162-178 (VGLTVWMFALNSVLSSL) traverse the membrane as a helical segment. Topologically, residues 179–205 (EFLIKFYLEEPVKKPEAPAASEAQTKQ) are cytoplasmic.

The protein belongs to the WRB/GET1 family. In terms of assembly, component of the Golgi to ER traffic (GET) complex, which is composed of GET1, GET2 and GET3. Within the complex, GET1 and GET2 form a heterotetramer which is stabilized by phosphatidylinositol binding and which binds to the GET3 homodimer.

It is found in the endoplasmic reticulum membrane. The protein resides in the golgi apparatus membrane. Functionally, required for the post-translational delivery of tail-anchored (TA) proteins to the endoplasmic reticulum. Together with GET2, acts as a membrane receptor for soluble GET3, which recognizes and selectively binds the transmembrane domain of TA proteins in the cytosol. The GET complex cooperates with the HDEL receptor ERD2 to mediate the ATP-dependent retrieval of resident ER proteins that contain a C-terminal H-D-E-L retention signal from the Golgi to the ER. In Clavispora lusitaniae (strain ATCC 42720) (Yeast), this protein is Golgi to ER traffic protein 1.